We begin with the raw amino-acid sequence, 299 residues long: Probable lipid kinase YegS-like (299 aa).

In terms of domain architecture, DAGKc spans 2-133 (SRSAGSFLIL…IDIAHVNDKT (132 aa)). ATP is bound by residues threonine 40, 66–72 (GDGTINE), and threonine 95. Mg(2+) is bound by residues leucine 215, aspartate 218, and leucine 220. Glutamate 271 (proton acceptor) is an active-site residue.

It belongs to the diacylglycerol/lipid kinase family. YegS lipid kinase subfamily. Requires Mg(2+) as cofactor. Ca(2+) is required as a cofactor.

The protein resides in the cytoplasm. Probably phosphorylates lipids; the in vivo substrate is unknown. This Cronobacter sakazakii (strain ATCC BAA-894) (Enterobacter sakazakii) protein is Probable lipid kinase YegS-like.